The primary structure comprises 513 residues: MIFSRSMASFTLVSAYAAAGLLAIIVLNLLRQLLFRNKTDPPLVFHWIPFLGSTVTYGMDPYAFFFSCRQKYGDIFTFILLGRKITVYLGIQGNEFILNGKLKDVNAEEIYSPLTTPVFGSDIVYDCPNSKLMEQKKFIKFGLTQAALESHVPLIEKEVLDYLKTSPNFKGTSGRVEITDAMAEITIFTAGRALQGEEVRKKLTAEFADLYHDLDRGFTPINFMLPWAPLPRNRKRDAAHARMREIYMDIINERRKNPDRETSDMIWNLMHCTYKNGQPLPDKEIAHMMITLLMAGQHSSSSISSWIMLRLASEPAVMEELYQEQITKLSPDGRTLPPLQYRDLDLLPLHQNLIKETLRLHLSIHSLMRKVKNPMPVPGTPYVVPADHVLLASPGVTALSDEYFPNASRWDPHRWENRVEKEDEEDIVDYGYGTVSKGTSSPYLPFGAGRHRCIGEKFAYVNLGVIVATMARHMKLFNVDGKKGVPATDYSSMFSGPSKPAIIGWERRFPEKS.

A helical transmembrane segment spans residues 10–30; that stretch reads FTLVSAYAAAGLLAIIVLNLL. N-linked (GlcNAc...) asparagine glycosylation is found at Asn-37 and Asn-406. Cys-453 is a heme binding site.

It belongs to the cytochrome P450 family. The cofactor is heme.

The protein localises to the endoplasmic reticulum membrane. It carries out the reaction a 14alpha-methyl steroid + 3 reduced [NADPH--hemoprotein reductase] + 3 O2 = a Delta(14) steroid + formate + 3 oxidized [NADPH--hemoprotein reductase] + 4 H2O + 4 H(+). The catalysed reaction is a 14alpha-methyl steroid + reduced [NADPH--hemoprotein reductase] + O2 = a 14alpha-hydroxymethyl steroid + oxidized [NADPH--hemoprotein reductase] + H2O + H(+). The enzyme catalyses a 14alpha-hydroxymethyl steroid + reduced [NADPH--hemoprotein reductase] + O2 = a 14alpha-formyl steroid + oxidized [NADPH--hemoprotein reductase] + 2 H2O + H(+). It catalyses the reaction a 14alpha-formyl steroid + reduced [NADPH--hemoprotein reductase] + O2 = a Delta(14) steroid + formate + oxidized [NADPH--hemoprotein reductase] + H2O + 2 H(+). It carries out the reaction lanosterol + 3 reduced [NADPH--hemoprotein reductase] + 3 O2 = 4,4-dimethyl-5alpha-cholesta-8,14,24-trien-3beta-ol + formate + 3 oxidized [NADPH--hemoprotein reductase] + 4 H2O + 4 H(+). The catalysed reaction is lanosterol + reduced [NADPH--hemoprotein reductase] + O2 = 32-hydroxylanosterol + oxidized [NADPH--hemoprotein reductase] + H2O + H(+). The enzyme catalyses 32-hydroxylanosterol + reduced [NADPH--hemoprotein reductase] + O2 = 32-oxolanosterol + oxidized [NADPH--hemoprotein reductase] + 2 H2O + H(+). It catalyses the reaction 32-oxolanosterol + reduced [NADPH--hemoprotein reductase] + O2 = 4,4-dimethyl-5alpha-cholesta-8,14,24-trien-3beta-ol + formate + oxidized [NADPH--hemoprotein reductase] + H2O + 2 H(+). It carries out the reaction eburicol + 3 reduced [NADPH--hemoprotein reductase] + 3 O2 = 14-demethyleburicol + formate + 3 oxidized [NADPH--hemoprotein reductase] + 4 H2O + 4 H(+). The catalysed reaction is eburicol + reduced [NADPH--hemoprotein reductase] + O2 = 32-hydroxyeburicol + oxidized [NADPH--hemoprotein reductase] + H2O + H(+). The enzyme catalyses 32-hydroxyeburicol + reduced [NADPH--hemoprotein reductase] + O2 = 32-oxoeburicol + oxidized [NADPH--hemoprotein reductase] + 2 H2O + H(+). It catalyses the reaction 32-oxoeburicol + reduced [NADPH--hemoprotein reductase] + O2 = 14-demethyleburicol + formate + oxidized [NADPH--hemoprotein reductase] + H2O + 2 H(+). Its pathway is steroid biosynthesis; sterol biosynthesis. Its function is as follows. Sterol 14alpha-demethylase, encoded by cyp51A, cyp51B and cyp51C, that plays a critical role in the third module of ergosterol biosynthesis pathway, being ergosterol the major sterol component in fungal membranes that participates in a variety of functions. The third module or late pathway involves the ergosterol synthesis itself through consecutive reactions that mainly occur in the endoplasmic reticulum (ER) membrane. In filamentous fungi, during the initial step of this module, lanosterol (lanosta-8,24-dien-3beta-ol) can be metabolized to eburicol. Sterol 14alpha-demethylase catalyzes the three-step oxidative removal of the 14alpha-methyl group (C-32) of both these sterols in the form of formate, and converts eburicol and lanosterol to 14-demethyleburicol (4,4,24-trimethylergosta-8,14,24(28)-trienol) and 4,4-dimethyl-5alpha-cholesta-8,14,24-trien-3beta-ol, respectively, which are further metabolized by other enzymes in the pathway to ergosterol. Can also use substrates not intrinsic to fungi, such as 24,25-dihydrolanosterol (DHL), producing 4,4'-dimethyl-8,14-cholestadien-3-beta-ol, but at lower rates than the endogenous substrates. Functionally, as a target of azole drugs, plays a crucial role in azole susceptibility. The polypeptide is Sterol 14-alpha demethylase (Aspergillus flavus (strain ATCC 200026 / FGSC A1120 / IAM 13836 / NRRL 3357 / JCM 12722 / SRRC 167)).